A 511-amino-acid polypeptide reads, in one-letter code: GMP synthase [glutamine-hydrolyzing] (511 aa).

The Glutamine amidotransferase type-1 domain maps to 5-195 (PIVVLDFGSQ…AKHICGCEST (191 aa)). The Nucleophile role is filled by C82. Residues H169 and E171 contribute to the active site. A GMPS ATP-PPase domain is found at 196–386 (WNMGSFAKEQ…LGLPKSMISR (191 aa)). 223–229 (SGGVDSS) is an ATP binding site.

In terms of assembly, homodimer.

It catalyses the reaction XMP + L-glutamine + ATP + H2O = GMP + L-glutamate + AMP + diphosphate + 2 H(+). The protein operates within purine metabolism; GMP biosynthesis; GMP from XMP (L-Gln route): step 1/1. Catalyzes the synthesis of GMP from XMP. The polypeptide is GMP synthase [glutamine-hydrolyzing] (Aliarcobacter butzleri (strain RM4018) (Arcobacter butzleri)).